The primary structure comprises 153 residues: Transcriptional repressor NrdR 3 (153 aa).

The disordered stretch occupies residues Met-1 to Arg-26. A zinc finger spans residues Cys-3 to Cys-34. Residues Gly-7 to Ala-24 are compositionally biased toward basic and acidic residues. The ATP-cone domain maps to Leu-49–Asp-139.

The protein belongs to the NrdR family. Zn(2+) is required as a cofactor.

Negatively regulates transcription of bacterial ribonucleotide reductase nrd genes and operons by binding to NrdR-boxes. In Paramagnetospirillum magneticum (strain ATCC 700264 / AMB-1) (Magnetospirillum magneticum), this protein is Transcriptional repressor NrdR 3.